Consider the following 385-residue polypeptide: Probable tRNA sulfurtransferase (385 aa).

The THUMP domain maps to 57-160 (DGVIERVKKV…RGNAYVFTDK (104 aa)). ATP is bound by residues 180–181 (ML), 205–206 (YY), arginine 262, glycine 284, and glutamine 293.

Belongs to the ThiI family.

Its subcellular location is the cytoplasm. It catalyses the reaction [ThiI sulfur-carrier protein]-S-sulfanyl-L-cysteine + a uridine in tRNA + 2 reduced [2Fe-2S]-[ferredoxin] + ATP + H(+) = [ThiI sulfur-carrier protein]-L-cysteine + a 4-thiouridine in tRNA + 2 oxidized [2Fe-2S]-[ferredoxin] + AMP + diphosphate. The catalysed reaction is [ThiS sulfur-carrier protein]-C-terminal Gly-Gly-AMP + S-sulfanyl-L-cysteinyl-[cysteine desulfurase] + AH2 = [ThiS sulfur-carrier protein]-C-terminal-Gly-aminoethanethioate + L-cysteinyl-[cysteine desulfurase] + A + AMP + 2 H(+). It participates in cofactor biosynthesis; thiamine diphosphate biosynthesis. Its function is as follows. Catalyzes the ATP-dependent transfer of a sulfur to tRNA to produce 4-thiouridine in position 8 of tRNAs, which functions as a near-UV photosensor. Also catalyzes the transfer of sulfur to the sulfur carrier protein ThiS, forming ThiS-thiocarboxylate. This is a step in the synthesis of thiazole, in the thiamine biosynthesis pathway. The sulfur is donated as persulfide by IscS. This chain is Probable tRNA sulfurtransferase, found in Clostridium perfringens (strain SM101 / Type A).